A 257-amino-acid polypeptide reads, in one-letter code: Gamma-secretase subunit APH-1B (257 aa).

7 helical membrane passes run V5–I25, I32–V52, L71–Y91, L115–N135, Y158–F178, W186–S206, and L213–G233.

Belongs to the APH-1 family. Probable component of the gamma-secretase complex, a complex composed of a presenilin homodimer (PSEN1 or PSEN2), nicastrin (NCSTN), APH1 (APH1A or APH1B) and PEN2. Such minimal complex is sufficient for secretase activity, although other components may exist. Interacts with PSEN1 and PSEN2. In terms of tissue distribution, weakly or not expressed in leukocytes, lung, placenta, small intestine, liver, kidney, spleen thymus, colon, skeletal muscle, heart and brain.

The protein localises to the membrane. Its function is as follows. Probable subunit of the gamma-secretase complex, an endoprotease complex that catalyzes the intramembrane cleavage of integral proteins such as Notch receptors and APP (amyloid-beta precursor protein). It probably represents a stabilizing cofactor for the presenilin homodimer that promotes the formation of a stable complex. Probably present in a minority of gamma-secretase complexes compared to APH1A. This Homo sapiens (Human) protein is Gamma-secretase subunit APH-1B (APH1B).